The following is a 267-amino-acid chain: Imidazole glycerol phosphate synthase subunit HisF (267 aa).

Catalysis depends on residues D22 and D141.

It belongs to the HisA/HisF family. As to quaternary structure, heterodimer of HisH and HisF.

It localises to the cytoplasm. The catalysed reaction is 5-[(5-phospho-1-deoxy-D-ribulos-1-ylimino)methylamino]-1-(5-phospho-beta-D-ribosyl)imidazole-4-carboxamide + L-glutamine = D-erythro-1-(imidazol-4-yl)glycerol 3-phosphate + 5-amino-1-(5-phospho-beta-D-ribosyl)imidazole-4-carboxamide + L-glutamate + H(+). The protein operates within amino-acid biosynthesis; L-histidine biosynthesis; L-histidine from 5-phospho-alpha-D-ribose 1-diphosphate: step 5/9. IGPS catalyzes the conversion of PRFAR and glutamine to IGP, AICAR and glutamate. The HisF subunit catalyzes the cyclization activity that produces IGP and AICAR from PRFAR using the ammonia provided by the HisH subunit. The chain is Imidazole glycerol phosphate synthase subunit HisF from Mycobacterium bovis (strain ATCC BAA-935 / AF2122/97).